Here is a 182-residue protein sequence, read N- to C-terminus: UPF0316 protein Sde_0566 (182 aa).

3 consecutive transmembrane segments (helical) span residues 7 to 27, 41 to 61, and 67 to 87; these read VAPE…VSLG, LAAF…GQVF, and WYLA…GMWI.

Belongs to the UPF0316 family.

It localises to the cell membrane. The sequence is that of UPF0316 protein Sde_0566 from Saccharophagus degradans (strain 2-40 / ATCC 43961 / DSM 17024).